Consider the following 184-residue polypeptide: Photosystem I assembly protein Ycf4 (184 aa).

2 consecutive transmembrane segments (helical) span residues 19–39 (ISNFCWAFILFLGSLGFLLVG) and 57–77 (IVFFPQGIVMSFYGIAGLFIS).

It belongs to the Ycf4 family.

The protein resides in the plastid. It is found in the chloroplast thylakoid membrane. In terms of biological role, seems to be required for the assembly of the photosystem I complex. The sequence is that of Photosystem I assembly protein Ycf4 from Nicotiana tomentosiformis (Tobacco).